Here is a 211-residue protein sequence, read N- to C-terminus: Pyridoxine/pyridoxamine 5'-phosphate oxidase (211 aa).

Substrate-binding positions include 7–10 (RTDY) and Lys-65. FMN-binding positions include 60–65 (RILLIK), 75–76 (FT), Arg-81, and Lys-82. Positions 122, 126, and 130 each coordinate substrate. Residues 139 to 140 (QS) and Trp-183 each bind FMN. 189–191 (RLH) is a binding site for substrate. Arg-193 is a binding site for FMN.

Belongs to the pyridoxamine 5'-phosphate oxidase family. As to quaternary structure, homodimer. It depends on FMN as a cofactor.

It catalyses the reaction pyridoxamine 5'-phosphate + O2 + H2O = pyridoxal 5'-phosphate + H2O2 + NH4(+). The enzyme catalyses pyridoxine 5'-phosphate + O2 = pyridoxal 5'-phosphate + H2O2. It participates in cofactor metabolism; pyridoxal 5'-phosphate salvage; pyridoxal 5'-phosphate from pyridoxamine 5'-phosphate: step 1/1. The protein operates within cofactor metabolism; pyridoxal 5'-phosphate salvage; pyridoxal 5'-phosphate from pyridoxine 5'-phosphate: step 1/1. Catalyzes the oxidation of either pyridoxine 5'-phosphate (PNP) or pyridoxamine 5'-phosphate (PMP) into pyridoxal 5'-phosphate (PLP). In Janthinobacterium sp. (strain Marseille) (Minibacterium massiliensis), this protein is Pyridoxine/pyridoxamine 5'-phosphate oxidase.